The chain runs to 220 residues: Aspartic protease inhibitor 5 (220 aa).

The first 23 residues, 1–23, serve as a signal peptide directing secretion; it reads MMKCLFLLCLCLLPIVVFSSTFT. Residues 24 to 32 constitute a propeptide that is removed on maturation; it reads SQNLIDLPS. A Vacuolar targeting signal motif is present at residues 26 to 31; the sequence is NLIDLP. The N-linked (GlcNAc...) asparagine glycan is linked to asparagine 51. 2 disulfides stabilise this stretch: cysteine 80-cysteine 125 and cysteine 174-cysteine 185.

The protein belongs to the protease inhibitor I3 (leguminous Kunitz-type inhibitor) family.

It is found in the vacuole. Functionally, inhibitor of cathepsin D (aspartic protease). May also inhibit trypsin and chymotrypsin (serine proteases). Protects the plant by inhibiting proteases of invading organisms. In Solanum tuberosum (Potato), this protein is Aspartic protease inhibitor 5.